Here is a 150-residue protein sequence, read N- to C-terminus: Transcriptional repressor NrdR (150 aa).

A zinc finger spans residues 3 to 34; that stretch reads CPFCNFEESKVVDSRATDDNTTIRRRRECLNC. The ATP-cone domain maps to 49–139; it reads VLVVKKDLAR…VYRQFKDINT (91 aa).

It belongs to the NrdR family. The cofactor is Zn(2+).

Its function is as follows. Negatively regulates transcription of bacterial ribonucleotide reductase nrd genes and operons by binding to NrdR-boxes. This is Transcriptional repressor NrdR from Clostridium botulinum (strain Eklund 17B / Type B).